We begin with the raw amino-acid sequence, 47 residues long: Protein YpaB (47 aa).

The protein is Protein YpaB (ypaB) of Escherichia coli (strain K12).